The chain runs to 188 residues: Thymidine kinase (188 aa).

Residue 17-24 coordinates ATP; the sequence is GPMFAGKT. E92 serves as the catalytic Proton acceptor. F121 serves as a coordination point for substrate. Zn(2+) is bound by residues C146 and C149. 166–170 is a binding site for substrate; sequence LILAG. Zn(2+)-binding residues include C179 and C182.

This sequence belongs to the thymidine kinase family.

It carries out the reaction thymidine + ATP = dTMP + ADP + H(+). In terms of biological role, phosphorylates thymidine. ASFV replicates in the cytoplasm of infected cells and contains genes encoding a number of enzymes needed for DNA synthesis, including thymidine kinase. Important for growth in swine macrophages in vitro and is a virus virulence factor in swine. This chain is Thymidine kinase, found in African swine fever virus (isolate Tick/South Africa/Pretoriuskop Pr4/1996) (ASFV).